A 164-amino-acid polypeptide reads, in one-letter code: Cytochrome c-type biogenesis protein CcmE (164 aa).

At 1 to 8 (MNPRRQKR) the chain is on the cytoplasmic side. Residues 9 to 29 (LIVISAIVLVIGAAIGLMLYA) traverse the membrane as a helical; Signal-anchor for type II membrane protein segment. The Periplasmic portion of the chain corresponds to 30-164 (LSQNIDLFYT…QAYSTPKVSG (135 aa)). Residues His132 and Tyr136 each contribute to the heme site.

It belongs to the CcmE/CycJ family.

Its subcellular location is the cell inner membrane. Its function is as follows. Heme chaperone required for the biogenesis of c-type cytochromes. Transiently binds heme delivered by CcmC and transfers the heme to apo-cytochromes in a process facilitated by CcmF and CcmH. The polypeptide is Cytochrome c-type biogenesis protein CcmE (Pseudoalteromonas atlantica (strain T6c / ATCC BAA-1087)).